We begin with the raw amino-acid sequence, 241 residues long: MSGCQAQGDCCSRPCGAQDKEHPRFLIPELCKQFYHLGWVTGTGGGISLKHGNEIYIAPSGVQKERIQPEDMFVCDINEQDISGPPASKKLKKSQCTPLFMNAYTMRGAGAVIHTHSKAAVMATLLFPGQEFKITHQEMIKGIRKCTSGGYYRYDDMLVVPIIENTPEEKDLKERMAHAMNEYPDSCAVLVRRHGVYVWGETWEKAKTMCECYDYLFDIAVSMKKMGLDPTQLPVGENGIV.

Cys96 lines the substrate pocket. His114 and His116 together coordinate Zn(2+). Glu138 functions as the Proton donor/acceptor in the catalytic mechanism. Zn(2+) is bound at residue His194.

Belongs to the aldolase class II family. MtnB subfamily. Homotetramer. Interacts with APAF1. May interact with CASP1. Zn(2+) is required as a cofactor. Expressed in skeletal muscle (at protein level).

It is found in the cytoplasm. The catalysed reaction is 5-(methylsulfanyl)-D-ribulose 1-phosphate = 5-methylsulfanyl-2,3-dioxopentyl phosphate + H2O. It functions in the pathway amino-acid biosynthesis; L-methionine biosynthesis via salvage pathway; L-methionine from S-methyl-5-thio-alpha-D-ribose 1-phosphate: step 2/6. Functionally, catalyzes the dehydration of methylthioribulose-1-phosphate (MTRu-1-P) into 2,3-diketo-5-methylthiopentyl-1-phosphate (DK-MTP-1-P). Functions in the methionine salvage pathway, which plays a key role in cancer, apoptosis, microbial proliferation and inflammation. May inhibit the CASP1-related inflammatory response (pyroptosis), the CASP9-dependent apoptotic pathway and the cytochrome c-dependent and APAF1-mediated cell death. The chain is Methylthioribulose-1-phosphate dehydratase from Mus musculus (Mouse).